Consider the following 402-residue polypeptide: S-adenosylmethionine synthase (402 aa).

His-15 is a binding site for ATP. Mg(2+) is bound at residue Asp-17. Glu-43 provides a ligand contact to K(+). Residues Glu-56 and Gln-99 each coordinate L-methionine. A flexible loop region spans residues 99–109; the sequence is QSPDIAQGVDT. ATP is bound by residues 174–176, 247–248, Asp-256, 262–263, Ala-279, and Lys-283; these read DGK, RF, and RK. Residue Asp-256 participates in L-methionine binding. Lys-287 serves as a coordination point for L-methionine.

This sequence belongs to the AdoMet synthase family. In terms of assembly, homotetramer; dimer of dimers. Mg(2+) is required as a cofactor. K(+) serves as cofactor.

It localises to the cytoplasm. It carries out the reaction L-methionine + ATP + H2O = S-adenosyl-L-methionine + phosphate + diphosphate. It functions in the pathway amino-acid biosynthesis; S-adenosyl-L-methionine biosynthesis; S-adenosyl-L-methionine from L-methionine: step 1/1. Functionally, catalyzes the formation of S-adenosylmethionine (AdoMet) from methionine and ATP. The overall synthetic reaction is composed of two sequential steps, AdoMet formation and the subsequent tripolyphosphate hydrolysis which occurs prior to release of AdoMet from the enzyme. In Streptomyces avermitilis (strain ATCC 31267 / DSM 46492 / JCM 5070 / NBRC 14893 / NCIMB 12804 / NRRL 8165 / MA-4680), this protein is S-adenosylmethionine synthase.